Reading from the N-terminus, the 305-residue chain is Homoserine kinase (305 aa).

95–105 (PHGRGLGSSSA) contacts ATP.

The protein belongs to the GHMP kinase family. Homoserine kinase subfamily.

The protein resides in the cytoplasm. The catalysed reaction is L-homoserine + ATP = O-phospho-L-homoserine + ADP + H(+). Its pathway is amino-acid biosynthesis; L-threonine biosynthesis; L-threonine from L-aspartate: step 4/5. Its function is as follows. Catalyzes the ATP-dependent phosphorylation of L-homoserine to L-homoserine phosphate. The sequence is that of Homoserine kinase from Streptomyces avermitilis (strain ATCC 31267 / DSM 46492 / JCM 5070 / NBRC 14893 / NCIMB 12804 / NRRL 8165 / MA-4680).